The chain runs to 269 residues: 3-deoxy-manno-octulosonate cytidylyltransferase (269 aa).

Belongs to the KdsB family.

Its subcellular location is the cytoplasm. The enzyme catalyses 3-deoxy-alpha-D-manno-oct-2-ulosonate + CTP = CMP-3-deoxy-beta-D-manno-octulosonate + diphosphate. The protein operates within nucleotide-sugar biosynthesis; CMP-3-deoxy-D-manno-octulosonate biosynthesis; CMP-3-deoxy-D-manno-octulosonate from 3-deoxy-D-manno-octulosonate and CTP: step 1/1. It functions in the pathway bacterial outer membrane biogenesis; lipopolysaccharide biosynthesis. Functionally, activates KDO (a required 8-carbon sugar) for incorporation into bacterial lipopolysaccharide in Gram-negative bacteria. The sequence is that of 3-deoxy-manno-octulosonate cytidylyltransferase from Cupriavidus pinatubonensis (strain JMP 134 / LMG 1197) (Cupriavidus necator (strain JMP 134)).